Here is a 393-residue protein sequence, read N- to C-terminus: Endoplasmic reticulum junction formation protein lunapark-A (393 aa).

The Cytoplasmic portion of the chain corresponds to 1–45 (MGAVVSRWRAKPSTVEVLEGLDKDIQVLEEYREKNHKQLKLWVYR). The chain crosses the membrane as a helical span at residues 46–66 (LLLYSALLYLMACAVVYAWYI). At 67-69 (PER) the chain is on the lumenal side. The helical transmembrane segment at 70–90 (MIGKLIVASPFLLFPLLIWLL) threads the bilayer. Residues 91-393 (RKLLIILYNK…EQDVSAMEVE (303 aa)) lie on the Cytoplasmic side of the membrane. Residues 95 to 130 (IILYNKRTERNNEKLEELKAEKKKILEQVMETETYK) adopt a coiled-coil conformation. The interval 146–209 (KLELETQPIG…PPEKGLSAST (64 aa)) is disordered. The segment covering 176–190 (TGRPPPVPVPGPSVP) has biased composition (pro residues). Residues 269–294 (CQQCLSHNGMALKEEFEYIAFRCAYC) form a C4-type; plays a role in ER morphology zinc finger. The interval 314–393 (AAEAKTSQDP…EQDVSAMEVE (80 aa)) is disordered. Composition is skewed to basic and acidic residues over residues 340–353 (ESKE…KAGD) and 364–383 (EEMK…KSDG).

This sequence belongs to the lunapark family. In terms of assembly, homodimer; homodimerization requires the C4-type zinc finger motif and decreases during mitosis in a phosphorylation-dependent manner. Phosphorylated. Phosphorylation occurs during interphase. Phosphorylation also occurs during mitosis; these phosphorylations reduce both its homodimerization and the ER three-way tubular junction formation.

It localises to the endoplasmic reticulum membrane. Functionally, endoplasmic reticulum (ER)-shaping membrane protein that plays a role in determining ER morphology. Involved in the stabilization of nascent three-way ER tubular junctions within the ER network. May also play a role as a curvature-stabilizing protein within three-way ER tubular junction network. This chain is Endoplasmic reticulum junction formation protein lunapark-A (lnpka), found in Danio rerio (Zebrafish).